Here is a 453-residue protein sequence, read N- to C-terminus: Bifunctional protein GlmU (453 aa).

Positions 1–231 (MERTCLAVIL…EIEMTGCNTR (231 aa)) are pyrophosphorylase. UDP-N-acetyl-alpha-D-glucosamine-binding positions include 10 to 13 (LAAG), K24, Q77, 82 to 83 (GT), 105 to 107 (YGD), G143, E157, N172, and N229. A Mg(2+)-binding site is contributed by D107. Mg(2+) is bound at residue N229. Positions 232–252 (AELAVIERFWQERRRHQLMLS) are linker. Positions 253–453 (GVTMIAPETV…ATKAAKKAKG (201 aa)) are N-acetyltransferase. UDP-N-acetyl-alpha-D-glucosamine-binding residues include R318 and K336. H348 serves as the catalytic Proton acceptor. Y351 and N362 together coordinate UDP-N-acetyl-alpha-D-glucosamine. Acetyl-CoA contacts are provided by residues A365, 371–372 (NY), S390, S408, and R425.

The protein in the N-terminal section; belongs to the N-acetylglucosamine-1-phosphate uridyltransferase family. This sequence in the C-terminal section; belongs to the transferase hexapeptide repeat family. As to quaternary structure, homotrimer. Mg(2+) is required as a cofactor.

It localises to the cytoplasm. The enzyme catalyses alpha-D-glucosamine 1-phosphate + acetyl-CoA = N-acetyl-alpha-D-glucosamine 1-phosphate + CoA + H(+). It catalyses the reaction N-acetyl-alpha-D-glucosamine 1-phosphate + UTP + H(+) = UDP-N-acetyl-alpha-D-glucosamine + diphosphate. The protein operates within nucleotide-sugar biosynthesis; UDP-N-acetyl-alpha-D-glucosamine biosynthesis; N-acetyl-alpha-D-glucosamine 1-phosphate from alpha-D-glucosamine 6-phosphate (route II): step 2/2. It functions in the pathway nucleotide-sugar biosynthesis; UDP-N-acetyl-alpha-D-glucosamine biosynthesis; UDP-N-acetyl-alpha-D-glucosamine from N-acetyl-alpha-D-glucosamine 1-phosphate: step 1/1. It participates in bacterial outer membrane biogenesis; LPS lipid A biosynthesis. Catalyzes the last two sequential reactions in the de novo biosynthetic pathway for UDP-N-acetylglucosamine (UDP-GlcNAc). The C-terminal domain catalyzes the transfer of acetyl group from acetyl coenzyme A to glucosamine-1-phosphate (GlcN-1-P) to produce N-acetylglucosamine-1-phosphate (GlcNAc-1-P), which is converted into UDP-GlcNAc by the transfer of uridine 5-monophosphate (from uridine 5-triphosphate), a reaction catalyzed by the N-terminal domain. This is Bifunctional protein GlmU from Rhizobium leguminosarum bv. trifolii (strain WSM2304).